Consider the following 565-residue polypeptide: Protein nucleotidyltransferase YdiU (565 aa).

8 residues coordinate ATP: G118, G120, R121, K141, D153, G154, R211, and R218. D290 acts as the Proton acceptor in catalysis. 2 residues coordinate Mg(2+): N291 and D300. D300 is a binding site for ATP.

It belongs to the SELO family. It depends on Mg(2+) as a cofactor. Mn(2+) serves as cofactor.

It catalyses the reaction L-seryl-[protein] + ATP = 3-O-(5'-adenylyl)-L-seryl-[protein] + diphosphate. The enzyme catalyses L-threonyl-[protein] + ATP = 3-O-(5'-adenylyl)-L-threonyl-[protein] + diphosphate. The catalysed reaction is L-tyrosyl-[protein] + ATP = O-(5'-adenylyl)-L-tyrosyl-[protein] + diphosphate. It carries out the reaction L-histidyl-[protein] + UTP = N(tele)-(5'-uridylyl)-L-histidyl-[protein] + diphosphate. It catalyses the reaction L-seryl-[protein] + UTP = O-(5'-uridylyl)-L-seryl-[protein] + diphosphate. The enzyme catalyses L-tyrosyl-[protein] + UTP = O-(5'-uridylyl)-L-tyrosyl-[protein] + diphosphate. Nucleotidyltransferase involved in the post-translational modification of proteins. It can catalyze the addition of adenosine monophosphate (AMP) or uridine monophosphate (UMP) to a protein, resulting in modifications known as AMPylation and UMPylation. This Nitrosospira multiformis (strain ATCC 25196 / NCIMB 11849 / C 71) protein is Protein nucleotidyltransferase YdiU.